The primary structure comprises 390 residues: Multidrug export protein EmrA (390 aa).

Over 1-24 (MSANAETQTPQQPVKKSGKRKRLL) the chain is Cytoplasmic. Residues 25–45 (LLLTLLFIIIAVAIGIYWFLV) traverse the membrane as a helical segment. The Periplasmic segment spans residues 46–390 (LRHFEETDDA…IDDIVKANAG (345 aa)). Residues 120 to 180 (INSKQLQANI…QAQLDVAIQQ (61 aa)) are a coiled coil.

It belongs to the membrane fusion protein (MFP) (TC 8.A.1) family. In terms of assembly, homodimer and homotrimer. Part of the tripartite efflux system EmrAB-TolC, which is composed of an inner membrane transporter, EmrB, a periplasmic membrane fusion protein, EmrA, and an outer membrane component, TolC. The complex forms a large protein conduit and can translocate molecules across both the inner and outer membranes. Interacts with EmrB. EmrAB complex forms a dimer in vitro.

The protein localises to the cell inner membrane. Functionally, part of the tripartite efflux system EmrAB-TolC, which confers resistance to antibiotics such as CCCP, FCCP, 2,4-dinitrophenol and nalidixic acid. EmrA is a drug-binding protein that provides a physical link between EmrB and TolC. The polypeptide is Multidrug export protein EmrA (emrA) (Escherichia coli (strain K12)).